The primary structure comprises 544 residues: MAKRIIYNENARRALERGIDILAEAVAVTLGPKGRNVVLEKKFGAPQIVNDGVTIAKEIELEDHIENTGVALIRQAASKTNDAAGDGTTTATVLAHAIVKEGLRNVAAGANAILLKRGIDKATGFLVDRIKEHARPVEDSKSIAQVGSISAGNDDEVGQMIAEAMDKVGKEGVISLEEGKSVTTELEITEGMRFDKGYISPYFATDPERMEAIFDEPFLLLTDKKIALVQDLVPVLEQVARAGRPLVIIAEDIEKEALATLVVNRLRGVLNVAAVKAPGFGDRRKAMLEDIAILTGGQLITEDAGLKLENTKLESLGKARRITITKDSTTIVAEGNDVAVKGRVEQIRRQMEETESSYDKEKLQERLAKLSGGVAVVKVGAATETEMKDKKLRLEDAINATKAAVEEGIVPGGGTTLAHLTPELEVWANSNLKDEELTGALIVARALPAPLKRIAENAGQNGAVIAERVKEKAFNVGFNAATNEFVDMFEAGIVDPAKVTRSALQNAASIAGMVLTTECIVVDKPEPKDAAPAGAGAGGGDFDY.

Residues 29-32 (TLGP), 86-90 (DGTTT), Gly413, 479-481 (NAA), and Asp495 each bind ATP.

The protein belongs to the chaperonin (HSP60) family. In terms of assembly, forms a cylinder of 14 subunits composed of two heptameric rings stacked back-to-back. Interacts with the co-chaperonin GroES.

It localises to the cytoplasm. The catalysed reaction is ATP + H2O + a folded polypeptide = ADP + phosphate + an unfolded polypeptide.. In terms of biological role, together with its co-chaperonin GroES, plays an essential role in assisting protein folding. The GroEL-GroES system forms a nano-cage that allows encapsulation of the non-native substrate proteins and provides a physical environment optimized to promote and accelerate protein folding. The sequence is that of Chaperonin GroEL 1 from Trichormus variabilis (strain ATCC 29413 / PCC 7937) (Anabaena variabilis).